Here is a 264-residue protein sequence, read N- to C-terminus: 3-methyl-2-oxobutanoate hydroxymethyltransferase (264 aa).

Mg(2+)-binding residues include D45 and D84. Residues 45–46 (DS), D84, and K112 each bind 3-methyl-2-oxobutanoate. Residue E114 coordinates Mg(2+). The active-site Proton acceptor is the E181.

Belongs to the PanB family. Homodecamer; pentamer of dimers. It depends on Mg(2+) as a cofactor.

The protein resides in the cytoplasm. It carries out the reaction 3-methyl-2-oxobutanoate + (6R)-5,10-methylene-5,6,7,8-tetrahydrofolate + H2O = 2-dehydropantoate + (6S)-5,6,7,8-tetrahydrofolate. It participates in cofactor biosynthesis; (R)-pantothenate biosynthesis; (R)-pantoate from 3-methyl-2-oxobutanoate: step 1/2. In terms of biological role, catalyzes the reversible reaction in which hydroxymethyl group from 5,10-methylenetetrahydrofolate is transferred onto alpha-ketoisovalerate to form ketopantoate. The polypeptide is 3-methyl-2-oxobutanoate hydroxymethyltransferase (Shigella dysenteriae serotype 1 (strain Sd197)).